The sequence spans 563 residues: Mitochondrial distribution and morphology protein 34 (563 aa).

Positions 1 to 195 (MAFNFNWSPL…LPAIIHRLSL (195 aa)) constitute an SMP-LTD domain. 2 disordered regions span residues 298 to 499 (ERGD…PHTP) and 531 to 563 (ARRQHDDKTARQGFWSTSSNGDDAPPAYEPKAL). 2 stretches are compositionally biased toward polar residues: residues 303–332 (AGTTTPATPSLQRPQSSLGSQSTTYTFSNR) and 346–357 (SLVNMNSATTGL). A compositionally biased stretch (basic residues) spans 365 to 383 (SRSHPTRKKKNRVVNLRKP). Positions 386–407 (TESSESGESETASTTAVSEPTV) are enriched in low complexity. Composition is skewed to polar residues over residues 458–471 (PSLTVQPSTPINTQ) and 478–488 (YNQSASTSYTP). The span at 531–540 (ARRQHDDKTA) shows a compositional bias: basic and acidic residues.

This sequence belongs to the MDM34 family. In terms of assembly, component of the ER-mitochondria encounter structure (ERMES) or MDM complex, composed of MMM1, MDM10, MDM12 and MDM34.

It is found in the mitochondrion outer membrane. Its function is as follows. Component of the ERMES/MDM complex, which serves as a molecular tether to connect the endoplasmic reticulum (ER) and mitochondria. Components of this complex are involved in the control of mitochondrial shape and protein biogenesis, and function in nonvesicular lipid trafficking between the ER and mitochondria. MDM34 is required for the interaction of the ER-resident membrane protein MMM1 and the outer mitochondrial membrane-resident beta-barrel protein MDM10. The sequence is that of Mitochondrial distribution and morphology protein 34 from Botryotinia fuckeliana (strain B05.10) (Noble rot fungus).